The chain runs to 324 residues: Elongation factor P--(R)-beta-lysine ligase (324 aa).

75 to 77 (SPE) contacts substrate. ATP-binding positions include 99–101 (RNQ) and Asn-108. Tyr-117 lines the substrate pocket. 243 to 244 (EL) contacts ATP. Glu-250 serves as a coordination point for substrate. Gly-299 is an ATP binding site.

The protein belongs to the class-II aminoacyl-tRNA synthetase family. EpmA subfamily. As to quaternary structure, homodimer.

It catalyses the reaction D-beta-lysine + L-lysyl-[protein] + ATP = N(6)-((3R)-3,6-diaminohexanoyl)-L-lysyl-[protein] + AMP + diphosphate + H(+). In terms of biological role, with EpmB is involved in the beta-lysylation step of the post-translational modification of translation elongation factor P (EF-P). Catalyzes the ATP-dependent activation of (R)-beta-lysine produced by EpmB, forming a lysyl-adenylate, from which the beta-lysyl moiety is then transferred to the epsilon-amino group of a conserved specific lysine residue in EF-P. This Buchnera aphidicola subsp. Schizaphis graminum (strain Sg) protein is Elongation factor P--(R)-beta-lysine ligase.